Consider the following 235-residue polypeptide: Phosphoribosylaminoimidazole-succinocarboxamide synthase (235 aa).

It belongs to the SAICAR synthetase family.

It carries out the reaction 5-amino-1-(5-phospho-D-ribosyl)imidazole-4-carboxylate + L-aspartate + ATP = (2S)-2-[5-amino-1-(5-phospho-beta-D-ribosyl)imidazole-4-carboxamido]succinate + ADP + phosphate + 2 H(+). Its pathway is purine metabolism; IMP biosynthesis via de novo pathway; 5-amino-1-(5-phospho-D-ribosyl)imidazole-4-carboxamide from 5-amino-1-(5-phospho-D-ribosyl)imidazole-4-carboxylate: step 1/2. The polypeptide is Phosphoribosylaminoimidazole-succinocarboxamide synthase (Clostridium beijerinckii (strain ATCC 51743 / NCIMB 8052) (Clostridium acetobutylicum)).